We begin with the raw amino-acid sequence, 202 residues long: Protein N-terminal glutamine amidohydrolase (202 aa).

Active-site residues include Cys27, His80, and Asp96.

It belongs to the NTAQ1 family. In terms of assembly, monomer.

Its subcellular location is the cytoplasm. The protein localises to the cytosol. It localises to the nucleus. It catalyses the reaction N-terminal L-glutaminyl-[protein] + H2O = N-terminal L-glutamyl-[protein] + NH4(+). Mediates the side-chain deamidation of N-terminal glutamine residues to glutamate, an important step in N-end rule pathway of protein degradation. Conversion of the resulting N-terminal glutamine to glutamate renders the protein susceptible to arginylation, polyubiquitination and degradation as specified by the N-end rule. Does not act on substrates with internal or C-terminal glutamine and does not act on non-glutamine residues in any position. Does not deaminate acetylated N-terminal glutamine. With the exception of proline, all tested second-position residues on substrate peptides do not greatly influence the activity. In contrast, a proline at position 2, virtually abolishes deamidation of N-terminal glutamine. The polypeptide is Protein N-terminal glutamine amidohydrolase (ntaq1) (Danio rerio (Zebrafish)).